A 480-amino-acid polypeptide reads, in one-letter code: Glutamate--tRNA ligase (480 aa).

The 'HIGH' region motif lies at 12–22 (PSPTGAPHLGL). Residues 255–259 (KLSKR) carry the 'KMSKS' region motif. Lys258 serves as a coordination point for ATP.

It belongs to the class-I aminoacyl-tRNA synthetase family. Glutamate--tRNA ligase type 1 subfamily. Monomer.

It localises to the cytoplasm. The enzyme catalyses tRNA(Glu) + L-glutamate + ATP = L-glutamyl-tRNA(Glu) + AMP + diphosphate. Its function is as follows. Catalyzes the attachment of glutamate to tRNA(Glu) in a two-step reaction: glutamate is first activated by ATP to form Glu-AMP and then transferred to the acceptor end of tRNA(Glu). This is Glutamate--tRNA ligase from Tropheryma whipplei (strain TW08/27) (Whipple's bacillus).